Reading from the N-terminus, the 125-residue chain is Glycine cleavage system H protein (125 aa).

A Lipoyl-binding domain is found at 22–104; that stretch reads SYIIGITDFA…YDTGWILKLT (83 aa). At Lys63 the chain carries N6-lipoyllysine.

This sequence belongs to the GcvH family. In terms of assembly, the glycine cleavage system is composed of four proteins: P, T, L and H. (R)-lipoate is required as a cofactor.

Its function is as follows. The glycine cleavage system catalyzes the degradation of glycine. The H protein shuttles the methylamine group of glycine from the P protein to the T protein. In terms of biological role, is also involved in protein lipoylation via its role as an octanoyl/lipoyl carrier protein intermediate. This chain is Glycine cleavage system H protein, found in Listeria welshimeri serovar 6b (strain ATCC 35897 / DSM 20650 / CCUG 15529 / CIP 8149 / NCTC 11857 / SLCC 5334 / V8).